Reading from the N-terminus, the 394-residue chain is Arogenate dehydratase 2 (394 aa).

The segment at 1–24 is disordered; the sequence is MAATTTLRSPKIPHPPPESTPSNL. Residues 1-47 constitute a chloroplast transit peptide; the sequence is MAATTTLRSPKIPHPPPESTPSNLSYLSQISLTPVPKRRRFISIYAC. One can recognise a Prephenate dehydratase domain in the interval 108–283; it reads RVAYQGVRGA…NVTRFLMLAR (176 aa). Positions 297-388 constitute an ACT domain; the sequence is SVVFSLDEGP…TFLRVLGSYP (92 aa).

As to expression, expressed at low levels in petals (corollas and tubes), stems, leaves, pistils, stamens, ovaries and sepals.

It localises to the plastid. The protein resides in the chloroplast stroma. It carries out the reaction prephenate + H(+) = 3-phenylpyruvate + CO2 + H2O. The catalysed reaction is L-arogenate + H(+) = L-phenylalanine + CO2 + H2O. The protein operates within amino-acid biosynthesis; L-phenylalanine biosynthesis; L-phenylalanine from L-arogenate: step 1/1. Converts the prephenate and L-arogenate produced from the shikimate-chorismate pathway into 3-phenylpyruvate and phenylalanine (Phe), respectively. Involved in floral volatile benzenoids and phenylpropanoids (FVBP) production. The protein is Arogenate dehydratase 2 of Petunia hybrida (Petunia).